Consider the following 217-residue polypeptide: N-(5'-phosphoribosyl)anthranilate isomerase (217 aa).

It belongs to the TrpF family.

It catalyses the reaction N-(5-phospho-beta-D-ribosyl)anthranilate = 1-(2-carboxyphenylamino)-1-deoxy-D-ribulose 5-phosphate. It functions in the pathway amino-acid biosynthesis; L-tryptophan biosynthesis; L-tryptophan from chorismate: step 3/5. In Chlorobium phaeovibrioides (strain DSM 265 / 1930) (Prosthecochloris vibrioformis (strain DSM 265)), this protein is N-(5'-phosphoribosyl)anthranilate isomerase.